The sequence spans 264 residues: MPRSCCSRSGALLLALLLQASMEVRGWCLESSQCQDLTTESNLLECIRACKPDLSAETPVFPGNGDEQPLTENPRKYVMGHFRWDRFGRRNSSSGSAHQKREDVAAGEDRGLLPEGGPEPRGDGAGPGPREGKRSYSMEHFRWGKPVGKKRRPVKVYPNGAEDESAEAFPLEFKRELTGQRPRAGDGPDGPADDGAGPRADLEHSLLVAAEKKDEGPYRMEHFRWGSPPKDKRYGGFMTSEKSQTPLVTLFKNAIIKNAYKKGQ.

The first 26 residues, 1-26, serve as a signal peptide directing secretion; the sequence is MPRSCCSRSGALLLALLLQASMEVRG. At F87 the chain carries Phenylalanine amide. 2 disordered regions span residues 88–204 and 219–238; these read GRRN…DLEH and RMEHFRWGSPPKDKRYGGFM. N91 carries an N-linked (GlcNAc...) asparagine glycan. Composition is skewed to basic and acidic residues over residues 99-122 and 130-142; these read QKREDVAAGEDRGLLPEGGPEPRG and REGKRSYSMEHFR. Residue E131 is modified to Glutamic acid 1-amide. An N-acetylserine; in Corticotropin modification is found at S135. V147 carries the post-translational modification Valine amide. S165 carries the post-translational modification Phosphoserine. Positions 172-186 are enriched in basic and acidic residues; it reads EFKRELTGQRPRAGD. Low complexity predominate over residues 189–199; it reads DGPADDGAGPR. A compositionally biased stretch (basic and acidic residues) spans 219–234; sequence RMEHFRWGSPPKDKRY.

Belongs to the POMC family. Post-translationally, specific enzymatic cleavages at paired basic residues yield the different active peptides. ACTH and MSH are produced by the pituitary gland.

Its subcellular location is the secreted. Stimulates the adrenal glands to release cortisol. Functionally, anorexigenic peptide. Increases the pigmentation of skin by increasing melanin production in melanocytes. Its function is as follows. Increases the pigmentation of skin by increasing melanin production in melanocytes. In terms of biological role, endogenous orexigenic opiate. Endogenous opiate. The chain is Pro-opiomelanocortin (POMC) from Macaca nemestrina (Pig-tailed macaque).